A 380-amino-acid chain; its full sequence is Glucose-1-phosphate adenylyltransferase (380 aa).

Alpha-D-glucose 1-phosphate is bound by residues tyrosine 100, glycine 165, 180 to 181 (EK), and serine 191.

This sequence belongs to the bacterial/plant glucose-1-phosphate adenylyltransferase family. As to quaternary structure, homotetramer.

It carries out the reaction alpha-D-glucose 1-phosphate + ATP + H(+) = ADP-alpha-D-glucose + diphosphate. Its pathway is glycan biosynthesis; glycogen biosynthesis. Functionally, involved in the biosynthesis of ADP-glucose, a building block required for the elongation reactions to produce glycogen. Catalyzes the reaction between ATP and alpha-D-glucose 1-phosphate (G1P) to produce pyrophosphate and ADP-Glc. The polypeptide is Glucose-1-phosphate adenylyltransferase (Clostridium acetobutylicum (strain ATCC 824 / DSM 792 / JCM 1419 / IAM 19013 / LMG 5710 / NBRC 13948 / NRRL B-527 / VKM B-1787 / 2291 / W)).